We begin with the raw amino-acid sequence, 196 residues long: ATP-dependent Clp protease proteolytic subunit (196 aa).

Residue Ser101 is the Nucleophile of the active site. His126 is a catalytic residue.

This sequence belongs to the peptidase S14 family. Component of the chloroplastic Clp protease core complex.

Its subcellular location is the plastid. The protein localises to the chloroplast stroma. It carries out the reaction Hydrolysis of proteins to small peptides in the presence of ATP and magnesium. alpha-casein is the usual test substrate. In the absence of ATP, only oligopeptides shorter than five residues are hydrolyzed (such as succinyl-Leu-Tyr-|-NHMec, and Leu-Tyr-Leu-|-Tyr-Trp, in which cleavage of the -Tyr-|-Leu- and -Tyr-|-Trp bonds also occurs).. In terms of biological role, cleaves peptides in various proteins in a process that requires ATP hydrolysis. Has a chymotrypsin-like activity. Plays a major role in the degradation of misfolded proteins. In Lotus japonicus (Lotus corniculatus var. japonicus), this protein is ATP-dependent Clp protease proteolytic subunit.